We begin with the raw amino-acid sequence, 182 residues long: Protein GrpE (182 aa).

Residues 1–37 (MSDSSKERKKKFTGMVNKQKSEDQQNNSKQADDLDEL) are disordered.

It belongs to the GrpE family. Homodimer.

The protein resides in the cytoplasm. In terms of biological role, participates actively in the response to hyperosmotic and heat shock by preventing the aggregation of stress-denatured proteins, in association with DnaK and GrpE. It is the nucleotide exchange factor for DnaK and may function as a thermosensor. Unfolded proteins bind initially to DnaJ; upon interaction with the DnaJ-bound protein, DnaK hydrolyzes its bound ATP, resulting in the formation of a stable complex. GrpE releases ADP from DnaK; ATP binding to DnaK triggers the release of the substrate protein, thus completing the reaction cycle. Several rounds of ATP-dependent interactions between DnaJ, DnaK and GrpE are required for fully efficient folding. This Wolbachia sp. subsp. Brugia malayi (strain TRS) protein is Protein GrpE.